Consider the following 860-residue polypeptide: JmjC domain-containing histone demethylation protein 1 (860 aa).

Disordered stretches follow at residues 1-45, 117-212, and 408-440; these read MSEQ…EEGK, STSP…PKRK, and DVKE…GGEI. The segment at 23–116 adopts a PHD-type zinc-finger fold; that stretch reads PEPCPLCRET…KWYCAPCLAR (94 aa). Composition is skewed to basic and acidic residues over residues 183–192 and 408–433; these read IDMKSEREQQ and DVKE…HLTE. The region spanning 416-579 is the JmjC domain; that stretch reads NDSREGSEIR…TQLRLRQIEI (164 aa). T471 lines the substrate pocket. Positions 474 and 476 each coordinate Fe cation. K491 serves as a coordination point for substrate. Residue H547 coordinates Fe cation. 2 disordered regions span residues 744–795 and 837–860; these read HPPA…ANEN and GPKL…DIDH. Over residues 750–763 the composition is skewed to polar residues; sequence ENRQSPQIETTTVQ. Positions 767 to 795 are enriched in low complexity; the sequence is PSTSSSDAISGSGPGASPGASANGGANEN.

This sequence belongs to the JHDM1 histone demethylase family. Fe(2+) is required as a cofactor.

Its subcellular location is the nucleus. The enzyme catalyses N(6),N(6)-dimethyl-L-lysyl(36)-[histone H3] + 2 2-oxoglutarate + 2 O2 = L-lysyl(36)-[histone H3] + 2 formaldehyde + 2 succinate + 2 CO2. Its function is as follows. Histone demethylase that specifically demethylates 'Lys-36' of histone H3, thereby playing a central role in histone code. The polypeptide is JmjC domain-containing histone demethylation protein 1 (JHD1) (Cryptococcus neoformans var. neoformans serotype D (strain JEC21 / ATCC MYA-565) (Filobasidiella neoformans)).